Consider the following 246-residue polypeptide: Small ribosomal subunit protein uS2 (246 aa).

Belongs to the universal ribosomal protein uS2 family.

This chain is Small ribosomal subunit protein uS2, found in Exiguobacterium sp. (strain ATCC BAA-1283 / AT1b).